Here is a 301-residue protein sequence, read N- to C-terminus: Alpha-ketoglutarate-dependent sulfate ester dioxygenase (301 aa).

A substrate-binding site is contributed by histidine 81. Fe cation contacts are provided by histidine 108 and aspartate 110. Valine 111 serves as a coordination point for substrate. Residue threonine 135 participates in 2-oxoglutarate binding. Histidine 264 is a binding site for Fe cation. The 2-oxoglutarate site is built by arginine 275 and arginine 279.

This sequence belongs to the TfdA dioxygenase family. Homotetramer. The cofactor is Fe(2+).

It carries out the reaction a primary linear alkyl sulfate ester + 2-oxoglutarate + O2 = an aldehyde + sulfate + succinate + CO2 + H(+). The enzyme catalyses 2-ethylhexyl sulfate + 2-oxoglutarate + O2 = 2-ethylhexanal + sulfate + succinate + CO2 + H(+). It catalyses the reaction decyl sulfate + 2-oxoglutarate + O2 = decanal + sulfate + succinate + CO2 + H(+). The catalysed reaction is hexyl sulfate + 2-oxoglutarate + O2 = hexanal + sulfate + succinate + CO2 + H(+). It carries out the reaction nonyl sufate + 2-oxoglutarate + O2 = nonanal + sulfate + succinate + CO2 + H(+). Strongly stimulated by ascorbate. Catalyzes the oxygenolytic cleavage of 2-ethylhexyl sulfate (2-EHS) in the presence of alpha-ketoglutarate to yield 2-ethyl-hexanal and succinate, the decarboxylated form of alpha-ketoglutarate. It can accept a wide range of alpha-keto acids including 2-oxo-valerate, 2-oxo-adipate, 2-oxo-octanoate, 3-methyl-2-oxo-butyrate, oxaloacetate-alpha-ketoadipate, and alpha-ketooctanoate. It can catalyze the cleavage of medium-chain alkyl sulfate esters such as butylsulfate, pentylsulfate, hexylsulfate, heptylsulfate, octylsulfate, nonylsulfate, decylsulfate and sodium dodecyl sulfate (SDS). This Pseudomonas putida (Arthrobacter siderocapsulatus) protein is Alpha-ketoglutarate-dependent sulfate ester dioxygenase.